The following is a 544-amino-acid chain: O-phosphoserine--tRNA(Cys) ligase (544 aa).

Substrate contacts are provided by residues 194–196 (HMT), 239–241 (SAS), 281–282 (YY), and N335.

It belongs to the class-II aminoacyl-tRNA synthetase family. O-phosphoseryl-tRNA(Cys) synthetase subfamily. In terms of assembly, homotetramer. Interacts with SepCysS.

The enzyme catalyses tRNA(Cys) + O-phospho-L-serine + ATP = O-phospho-L-seryl-tRNA(Cys) + AMP + diphosphate. In terms of biological role, catalyzes the attachment of O-phosphoserine (Sep) to tRNA(Cys). The chain is O-phosphoserine--tRNA(Cys) ligase from Methanopyrus kandleri (strain AV19 / DSM 6324 / JCM 9639 / NBRC 100938).